Reading from the N-terminus, the 347-residue chain is N-acetyl-gamma-glutamyl-phosphate reductase (347 aa).

Residue Cys-151 is part of the active site.

Belongs to the NAGSA dehydrogenase family. Type 1 subfamily.

Its subcellular location is the cytoplasm. It carries out the reaction N-acetyl-L-glutamate 5-semialdehyde + phosphate + NADP(+) = N-acetyl-L-glutamyl 5-phosphate + NADPH + H(+). Its pathway is amino-acid biosynthesis; L-arginine biosynthesis; N(2)-acetyl-L-ornithine from L-glutamate: step 3/4. Its function is as follows. Catalyzes the NADPH-dependent reduction of N-acetyl-5-glutamyl phosphate to yield N-acetyl-L-glutamate 5-semialdehyde. This chain is N-acetyl-gamma-glutamyl-phosphate reductase, found in Corynebacterium diphtheriae (strain ATCC 700971 / NCTC 13129 / Biotype gravis).